Here is a 100-residue protein sequence, read N- to C-terminus: Aspartyl/glutamyl-tRNA(Asn/Gln) amidotransferase subunit C (100 aa).

The protein belongs to the GatC family. Heterotrimer of A, B and C subunits.

The enzyme catalyses L-glutamyl-tRNA(Gln) + L-glutamine + ATP + H2O = L-glutaminyl-tRNA(Gln) + L-glutamate + ADP + phosphate + H(+). It catalyses the reaction L-aspartyl-tRNA(Asn) + L-glutamine + ATP + H2O = L-asparaginyl-tRNA(Asn) + L-glutamate + ADP + phosphate + 2 H(+). Functionally, allows the formation of correctly charged Asn-tRNA(Asn) or Gln-tRNA(Gln) through the transamidation of misacylated Asp-tRNA(Asn) or Glu-tRNA(Gln) in organisms which lack either or both of asparaginyl-tRNA or glutaminyl-tRNA synthetases. The reaction takes place in the presence of glutamine and ATP through an activated phospho-Asp-tRNA(Asn) or phospho-Glu-tRNA(Gln). The protein is Aspartyl/glutamyl-tRNA(Asn/Gln) amidotransferase subunit C of Streptococcus thermophilus (strain ATCC BAA-491 / LMD-9).